A 980-amino-acid chain; its full sequence is Serine/threonine-protein phosphatase 4 regulatory subunit 3 (980 aa).

The WH1 domain maps to 1–105; it reads MTTDTRRRVK…EKICQVQGKD (105 aa). 3 disordered regions span residues 640-668, 695-861, and 885-980; these read RDKM…RQME, VSEK…SLCD, and VTAA…ARQA. Residues 695-708 show a composition bias toward polar residues; it reads VSEKNGPQTQNQQK. 4 stretches are compositionally biased toward low complexity: residues 709-749, 757-789, 803-859, and 885-926; these read SSPP…SSSP, QTQA…QQTQ, EAPQ…AASL, and VTAA…SPAS. Polar residues predominate over residues 929–939; it reads QDANSTEGTSS. A compositionally biased stretch (basic and acidic residues) spans 940–951; that stretch reads EADKTTAKKGLV. Positions 953-968 are enriched in acidic residues; that stretch reads YESDSGEDDYEEDEYS.

The protein belongs to the SMEK family. As to quaternary structure, serine/threonine-protein phosphatase 4 (PP4) occurs in different assemblies of the catalytic and one or more regulatory subunits. Probably part of a PP4 PPP4C-PPP4R2-PPP4R3 complex containing Pp4-19C, PPP4R2r and flfl. Interacts with mira. In terms of tissue distribution, expressed in neuroblasts.

The protein localises to the nucleus. Its subcellular location is the membrane. It is found in the cytoplasm. In terms of biological role, regulatory subunit of serine/threonine-protein phosphatase 4. The probable PP4 complex Pp4-19C-PPP4R2r-flfl (PPP4C-PPP4R2-PPP4R3) is required to prevent caspase induced cell death (in vitro). May be involved in DNA damage repair. Key mediator specific for the localization of mira and associated cell fate determinants during both interphase and mitosis. Nuclear Flfl is required to exclude mira/pros from the nucleus when inefficiently bound to the cytoskeleton/cortex, whereas cytosolic or membrane-associated flfl is required for the cortical association and asymmetric localization of mira/pros/brat/stau at metaphase and anaphase. This chain is Serine/threonine-protein phosphatase 4 regulatory subunit 3 (flfl), found in Drosophila melanogaster (Fruit fly).